The sequence spans 441 residues: uncharacterized protein (441 aa).

The N-terminal stretch at 1 to 23 is a signal peptide; that stretch reads MSRKYLLSLLLVGALVISVVASG. Cys-24 carries the N-acetylcysteine modification. The S-archaeol cysteine moiety is linked to residue Cys-24.

This sequence belongs to the bacterial solute-binding protein 1 family.

The protein localises to the cell membrane. Functionally, probably part of a binding-protein-dependent transport system PH1214/15/16. This is an uncharacterized protein from Pyrococcus horikoshii (strain ATCC 700860 / DSM 12428 / JCM 9974 / NBRC 100139 / OT-3).